Consider the following 437-residue polypeptide: O-acetyl-L-homoserine sulfhydrylase (437 aa).

At lysine 216 the chain carries N6-(pyridoxal phosphate)lysine.

Belongs to the trans-sulfuration enzymes family. As to quaternary structure, homohexamer. Pyridoxal 5'-phosphate is required as a cofactor.

It catalyses the reaction O-acetyl-L-homoserine + hydrogen sulfide = L-homocysteine + acetate. The catalysed reaction is O-acetyl-L-homoserine + methanethiol = L-methionine + acetate + H(+). It participates in amino-acid biosynthesis; L-methionine biosynthesis via de novo pathway; L-homocysteine from O-acetyl-L-homoserine: step 1/1. Inhibited by methionine and cystathionine. Catalyzes the conversion of O-acetyl-L-homoserine (OAH) into homocysteine in the methionine biosynthesis pathway. Can also use dimethyldisulfide and methanethiol as reduced sulfur sources, leading to the direct formation of methionine. Has weak cystathionine gamma-synthase activity. The protein is O-acetyl-L-homoserine sulfhydrylase of Corynebacterium glutamicum (strain ATCC 13032 / DSM 20300 / JCM 1318 / BCRC 11384 / CCUG 27702 / LMG 3730 / NBRC 12168 / NCIMB 10025 / NRRL B-2784 / 534).